The sequence spans 311 residues: Homeobox protein knotted-1-like 10 (311 aa).

Disordered regions lie at residues 1–45 and 153–184; these read MEDL…PATT and LCGGAPPPTDNSDEMVGSSEDEPCSGDADAAD. The segment covering 12 to 22 has biased composition (gly residues); it reads SRGGGGGGGGA. The ELK domain maps to 197-217; the sequence is ELKEMLLKKYSGCLSRLRSEF. The homeobox; TALE-type DNA-binding region spans 218–281; that stretch reads LKKRKKGKLP…NQRKRHWKPS (64 aa).

Belongs to the TALE/KNOX homeobox family.

The protein localises to the nucleus. Functionally, probable transcription factor that may be involved in shoot formation during embryogenesis. The chain is Homeobox protein knotted-1-like 10 (OSH71) from Oryza sativa subsp. indica (Rice).